Here is a 149-residue protein sequence, read N- to C-terminus: Large ribosomal subunit protein uL15 (149 aa).

Residues 1–58 (MKLHNLRPAKGGEVKARKRVGRGYGSGLGHNAGRGRDGQNSRSGGGVRPGFEGGQMPL) form a disordered region. Composition is skewed to gly residues over residues 22–32 (RGYGSGLGHNA) and 43–53 (SGGGVRPGFEG).

This sequence belongs to the universal ribosomal protein uL15 family. As to quaternary structure, part of the 50S ribosomal subunit.

Functionally, binds to the 23S rRNA. The sequence is that of Large ribosomal subunit protein uL15 from Finegoldia magna (strain ATCC 29328 / DSM 20472 / WAL 2508) (Peptostreptococcus magnus).